A 1040-amino-acid polypeptide reads, in one-letter code: MGTATRRKPHLLLVAAVALVSSSAWSSALGSQTTFGPVFEDQPLSVLFPEESTEEQVLLACRARASPPATYRWKMNGTEMKLEPGSRHQLVGGNLVIMNPTKAQDAGVYQCLASNPVGTVVSREAILRFGFLQEFSKEERDPVKAHEGWGVMLPCNPPAHYPGLSYRWLLNEFPNFIPTDGRHFVSQTTGNLYIARTNASDLGNYSCLATSHMDFSTKSVFSKFAQLNLAAEDTRLFAPSIKARFPAETYALVGQQVTLECFAFGNPVPRIKWRKVDGSLSPQWTTAEPTLQIPSVSFEDEGTYECEAENSKGRDTVQGRIIVQAQPEWLKVISDTEADIGSNLRWGCAAAGKPRPTVRWLRNGEPLASQNRVEVLAGDLRFSKLSLEDSGMYQCVAENKHGTIYASAELAVQALAPDFRLNPVRRLIPAARGGEILIPCQPRAAPKAVVLWSKGTEILVNSSRVTVTPDGTLIIRNISRSDEGKYTCFAENFMGKANSTGILSVRDATKITLAPSSADINLGDNLTLQCHASHDPTMDLTFTWTLDDFPIDFDKPGGHYRRTNVKETIGDLTILNAQLRHGGKYTCMAQTVVDSASKEATVLVRGPPGPPGGVVVRDIGDTTIQLSWSRGFDNHSPIAKYTLQARTPPAGKWKQVRTNPANIEGNAETAQVLGLTPWMDYEFRVIASNILGTGEPSGPSSKIRTREAAPSVAPSGLSGGGGAPGELIVNWTPMSREYQNGDGFGYLLSFRRQGSTHWQTARVPGADAQYFVYSNESVRPYTPFEVKIRSYNRRGDGPESLTALVYSAEEEPRVAPTKVWAKGVSSSEMNVTWEPVQQDMNGILLGYEIRYWKAGDKEAAADRVRTAGLDTSARVSGLHPNTKYHVTVRAYNRAGTGPASPSANATTMKPPPRRPPGNISWTFSSSSLSIKWDPVVPFRNESAVTGYKMLYQNDLHLTPTLHLTGKNWIEIPVPEDIGHALVQIRTTGPGGDGIPAEVHIVRNGGTSMMVENMAVRPAPHPGTVISHSVAMLILIGSLEL.

A signal peptide spans 1–30; it reads MGTATRRKPHLLLVAAVALVSSSAWSSALG. 6 Ig-like C2-type domains span residues 43-128, 133-222, 239-322, 327-411, 417-504, and 509-603; these read PLSV…AILR, QEFS…SVFS, PSIK…GRII, PEWL…AELA, PDFR…GILS, and TKIT…ATVL. Intrachain disulfides connect cysteine 61–cysteine 111, cysteine 155–cysteine 207, cysteine 261–cysteine 306, and cysteine 348–cysteine 395. Asparagine 76, asparagine 198, and asparagine 204 each carry an N-linked (GlcNAc...) asparagine glycan. N-linked (GlcNAc...) asparagine glycosylation is found at asparagine 461, asparagine 477, asparagine 498, and asparagine 525. Fibronectin type-III domains lie at 610–708, 713–810, 815–910, and 915–1006; these read PPGG…TREA, APSG…SAEE, APTK…TMKP, and PPGN…NGGT. The disordered stretch occupies residues 694 to 720; that stretch reads GEPSGPSSKIRTREAAPSVAPSGLSGG. The short motif at 794 to 796 is the Cell attachment site element; that stretch reads RGD. N-linked (GlcNAc...) asparagine glycosylation is found at asparagine 830, asparagine 904, asparagine 918, and asparagine 940. The interval 894 to 919 is disordered; sequence AGTGPASPSANATTMKPPPRRPPGNI. Asparagine 1012 is lipidated: GPI-anchor amidated asparagine. Positions 1013–1040 are cleaved as a propeptide — removed in mature form; it reads MAVRPAPHPGTVISHSVAMLILIGSLEL.

The protein belongs to the immunoglobulin superfamily. Contactin family.

The protein resides in the cell membrane. In terms of biological role, in conjunction with another transmembrane protein, CNTNAP2, contributes to the organization of axonal domains at nodes of Ranvier by maintaining voltage-gated potassium channels at the juxtaparanodal region. May be involved in cell adhesion. In Homo sapiens (Human), this protein is Contactin-2 (CNTN2).